Here is a 333-residue protein sequence, read N- to C-terminus: PDZ domain-containing protein GIPC1 (333 aa).

A compositionally biased stretch (basic residues) spans 1–11; sequence MPLGLGRRKKA. The segment at 1 to 53 is disordered; sequence MPLGLGRRKKAPPLVENEEAEPSRSGLGVGEPGPLGGSAAGESQMGLPPPPAA. Residues 27-39 are compositionally biased toward gly residues; the sequence is LGVGEPGPLGGSA. Serine 68 carries the phosphoserine modification. A PDZ domain is found at 133-213; the sequence is EVEVFKSEEA…GRTFTLKLTE (81 aa). Residues serine 222, serine 225, and serine 232 each carry the phosphoserine modification. Residues 223-244 form a disordered region; that stretch reads QRSAGGHPGSGPQLGTGRGTLR. Positions 228–240 are enriched in gly residues; that stretch reads GHPGSGPQLGTGR. At threonine 242 the chain carries Phosphothreonine. A Phosphoserine modification is found at serine 247.

The protein belongs to the GIPC family. As to quaternary structure, interacts with GLUT1 (C-terminus), ACTN1, KIF1B, MYO6 and PLEKHG5. Interacts with RGS19 C-terminus. Interacts with SDC4/syndecan-4 and SEMA4C/semaphorin-4C. Widely expressed.

It is found in the cytoplasm. Its subcellular location is the membrane. Inhibits endothelial cell migration (in vitro). May be involved in G protein-linked signaling. This is PDZ domain-containing protein GIPC1 (Gipc1) from Mus musculus (Mouse).